The following is a 516-amino-acid chain: uncharacterized protein (516 aa).

Residues 31 to 185 (ACIFLSKFDM…LDKFDIFEKF (155 aa)) form the uDENN domain. In terms of domain architecture, cDENN spans 211–365 (HLVEYLPYWT…LEVYEKLILG (155 aa)). The region spanning 367 to 513 (LQEDASTNAT…DISNLPECLG (147 aa)) is the dDENN domain. 2 S-palmitoyl cysteine lipidation sites follow: C511 and C516.

Post-translationally, palmitoylated by AKR1.

The protein localises to the lipid droplet. In terms of biological role, may be involved in lipid metabolism. This is an uncharacterized protein from Saccharomyces cerevisiae (strain ATCC 204508 / S288c) (Baker's yeast).